The chain runs to 546 residues: Chaperonin GroEL (546 aa).

Residues 30–33, Lys51, 87–91, Gly415, and Asp496 each bind ATP; these read TLGP and DGTTT. Residues 526–546 are disordered; sequence PQKDAPAGGGMPDMGGMGGMM. Gly residues predominate over residues 532-546; the sequence is AGGGMPDMGGMGGMM.

Belongs to the chaperonin (HSP60) family. Forms a cylinder of 14 subunits composed of two heptameric rings stacked back-to-back. Interacts with the co-chaperonin GroES.

It is found in the cytoplasm. The enzyme catalyses ATP + H2O + a folded polypeptide = ADP + phosphate + an unfolded polypeptide.. Functionally, together with its co-chaperonin GroES, plays an essential role in assisting protein folding. The GroEL-GroES system forms a nano-cage that allows encapsulation of the non-native substrate proteins and provides a physical environment optimized to promote and accelerate protein folding. In Ruegeria pomeroyi (strain ATCC 700808 / DSM 15171 / DSS-3) (Silicibacter pomeroyi), this protein is Chaperonin GroEL.